The primary structure comprises 186 residues: Adenylyl-sulfate kinase (186 aa).

17–24 (GLSGAGKT) is a binding site for ATP. Residue Ser91 is the Phosphoserine intermediate of the active site.

This sequence belongs to the APS kinase family.

It catalyses the reaction adenosine 5'-phosphosulfate + ATP = 3'-phosphoadenylyl sulfate + ADP + H(+). Its pathway is sulfur metabolism; hydrogen sulfide biosynthesis; sulfite from sulfate: step 2/3. Its function is as follows. Catalyzes the synthesis of activated sulfate. This chain is Adenylyl-sulfate kinase, found in Chloroflexus aurantiacus (strain ATCC 29364 / DSM 637 / Y-400-fl).